Reading from the N-terminus, the 523-residue chain is 2-isopropylmalate synthase (523 aa).

The region spanning 5-267 (VIIFDTTLRD…HTAINHQEIW (263 aa)) is the Pyruvate carboxyltransferase domain. Residues Asp14, His202, His204, and Asn238 each coordinate Mn(2+). Residues 392–523 (RLDYFSVQSS…QHNENNKETV (132 aa)) form a regulatory domain region.

This sequence belongs to the alpha-IPM synthase/homocitrate synthase family. LeuA type 1 subfamily. As to quaternary structure, homodimer. It depends on Mn(2+) as a cofactor.

It is found in the cytoplasm. It carries out the reaction 3-methyl-2-oxobutanoate + acetyl-CoA + H2O = (2S)-2-isopropylmalate + CoA + H(+). It functions in the pathway amino-acid biosynthesis; L-leucine biosynthesis; L-leucine from 3-methyl-2-oxobutanoate: step 1/4. Functionally, catalyzes the condensation of the acetyl group of acetyl-CoA with 3-methyl-2-oxobutanoate (2-ketoisovalerate) to form 3-carboxy-3-hydroxy-4-methylpentanoate (2-isopropylmalate). The sequence is that of 2-isopropylmalate synthase from Shigella dysenteriae serotype 1 (strain Sd197).